The primary structure comprises 387 residues: Lymphocyte transmembrane adapter 1 (387 aa).

At 1-37 (MDVTTSAWSETTRRISEPSTLQGTLGSLDKAEDHSSS) the chain is on the extracellular side. A helical; Signal-anchor for type III membrane protein transmembrane segment spans residues 38–58 (IFSGFAALLAILLVVAVICVL). The Cytoplasmic segment spans residues 59–387 (WCCGKRKKRQ…VCAAEAGARG (329 aa)). The interval 114 to 136 (VSTESLLSRNSDSPSSEHVPSRA) is disordered. Positions 118-129 (SLLSRNSDSPSS) are enriched in low complexity. A Phosphotyrosine modification is found at tyrosine 195. The disordered stretch occupies residues 230–268 (SEEIDEGCGNASDCTSLGSPGTENSDPLSDGEGSSQTSN). Polar residues predominate over residues 241–268 (SDCTSLGSPGTENSDPLSDGEGSSQTSN). Residues tyrosine 270 and tyrosine 296 each carry the phosphotyrosine modification. The interval 294-387 (RDYENVPPGP…VCAAEAGARG (94 aa)) is disordered. Basic and acidic residues predominate over residues 319 to 329 (DHVEGRTDGPE). Over residues 360–369 (PWEDAEETSS) the composition is skewed to acidic residues. The residue at position 375 (tyrosine 375) is a Phosphotyrosine.

As to quaternary structure, when phosphorylated, interacts with GRB2, PIK3R1 and GRAP2. In terms of processing, phosphorylated on tyrosines upon TCR or BCR activation; which leads to the recruitment of GRB2, PIK3R1 and GRAP2.

The protein resides in the cell membrane. Its function is as follows. Negatively regulates TCR (T-cell antigen receptor)-mediated signaling in T-cells and BCR (B-cell antigen receptor)-mediated signaling in B-cells. In Bos taurus (Bovine), this protein is Lymphocyte transmembrane adapter 1 (LAX1).